The chain runs to 388 residues: Fetuin-B (388 aa).

The first 18 residues, 1–18 (MGLLRLLVLCTLAACCMA), serve as a signal peptide directing secretion. Cystatin fetuin-B-type domains lie at 28–141 (QRPL…YNCT) and 152–264 (TTCP…VTCE). Residue Asn-40 is glycosylated (N-linked (GlcNAc...) asparagine). Intrachain disulfides connect Cys-96–Cys-107, Cys-120–Cys-140, Cys-154–Cys-157, Cys-217–Cys-224, and Cys-237–Cys-263. N-linked (GlcNAc...) asparagine glycosylation is present at Asn-139. 2 disordered regions span residues 270-343 (AQVP…PQGD) and 367-388 (KEQR…VLPP). The span at 279 to 300 (AVTQGPQKLPQKNTAPTSSPSV) shows a compositional bias: polar residues. Thr-292 and Thr-295 each carry an O-linked (GalNAc...) threonine glycan. Position 321 is a phosphoserine (Ser-321). Residues 367–381 (KEQRSAECPGPEKEN) are compositionally biased toward basic and acidic residues.

Belongs to the fetuin family. Liver, lung and tongue.

Its subcellular location is the secreted. Protease inhibitor required for egg fertilization. Required to prevent premature zona pellucida hardening before fertilization, probably by inhibiting the protease activity of ASTL, a protease that mediates the cleavage of ZP2 and triggers zona pellucida hardening. The chain is Fetuin-B (Fetub) from Mus musculus (Mouse).